Here is a 392-residue protein sequence, read N- to C-terminus: Major outer membrane porin (392 aa).

The signal sequence occupies residues 1-22; the sequence is MKKLLKSALLFAAAGSALSLQA.

The protein belongs to the chlamydial porin (CP) (TC 1.B.2) family. Part of a disulfide cross-linked outer membrane complex (COMC) composed of the major outer membrane porin (MOMP), the small cysteine-rich protein (OmcA) and the large cysteine-rich periplasmic protein (OmcB).

The protein resides in the cell outer membrane. In terms of biological role, in elementary bodies (EBs, the infectious stage, which is able to survive outside the host cell) provides the structural integrity of the outer envelope through disulfide cross-links with the small cysteine-rich protein and the large cysteine-rich periplasmic protein. It has been described in publications as the Sarkosyl-insoluble COMC (Chlamydia outer membrane complex), and serves as the functional equivalent of peptidoglycan. Functionally, permits diffusion of specific solutes through the outer membrane. This chain is Major outer membrane porin (ompA), found in Chlamydia psittaci (Chlamydophila psittaci).